Reading from the N-terminus, the 324-residue chain is D-alanine--D-alanine ligase (324 aa).

Residues 121–321 form the ATP-grasp domain; it reads NQYLKGFGIR…IKDVMTDIIE (201 aa). 149 to 204 is an ATP binding site; the sequence is INKIGLPCFIKPNAGGSSFGVTKVKTKEDIQPAIEKAFEESDEVMIEAFMKGTEIT. Mg(2+)-binding residues include Asp275, Glu288, and Asn290.

Belongs to the D-alanine--D-alanine ligase family. Mg(2+) is required as a cofactor. The cofactor is Mn(2+).

The protein resides in the cytoplasm. It catalyses the reaction 2 D-alanine + ATP = D-alanyl-D-alanine + ADP + phosphate + H(+). It functions in the pathway cell wall biogenesis; peptidoglycan biosynthesis. Cell wall formation. This is D-alanine--D-alanine ligase from Phocaeicola vulgatus (strain ATCC 8482 / DSM 1447 / JCM 5826 / CCUG 4940 / NBRC 14291 / NCTC 11154) (Bacteroides vulgatus).